The chain runs to 639 residues: ATP-dependent rRNA helicase spb4 (639 aa).

Residues 14-42 (WDAVTPPLSEWVLEAMSSMGFARMTPVQA) carry the Q motif motif. One can recognise a Helicase ATP-binding domain in the interval 45–249 (IPLFMAHKDV…RVGLRNPVKI (205 aa)). 58 to 65 (AVTGSGKT) contacts ATP. The short motif at 197-200 (DEAD) is the DEAD box element. The Helicase C-terminal domain occupies 283 to 437 (ALKNILSSVQ…SISFSDADAT (155 aa)). 2 disordered regions span residues 531–601 (RKEL…ETKE) and 620–639 (AAKA…KGFD). Residues 561–624 (QNAENKNKKL…RFRQAAAKAE (64 aa)) are a coiled coil. Residues 577-601 (KLKQEKTKWENMTEEERQKARETKE) show a composition bias toward basic and acidic residues.

This sequence belongs to the DEAD box helicase family. DDX55/SPB4 subfamily. In terms of assembly, component of pre-60S ribosomal complexes.

The protein localises to the nucleus. It is found in the nucleolus. The enzyme catalyses ATP + H2O = ADP + phosphate + H(+). In terms of biological role, ATP-binding RNA helicase involved in the biogenesis of 60S ribosomal subunits. Binds 90S pre-ribosomal particles and dissociates from pre-60S ribosomal particles after processing of 27SB pre-rRNA. Required for the normal formation of 18S rRNA through the processing of pre-rRNAs at sites A0, A1 and A2, and the normal formation of 25S and 5.8S rRNAs through the processing of pre-rRNAs at sites C1 and C2. This chain is ATP-dependent rRNA helicase spb4, found in Aspergillus clavatus (strain ATCC 1007 / CBS 513.65 / DSM 816 / NCTC 3887 / NRRL 1 / QM 1276 / 107).